A 405-amino-acid chain; its full sequence is Angiopoietin-related protein 4 (405 aa).

The N-terminal stretch at 1 to 23 (MRCAPTAGAALVLCAATAGLLSA) is a signal peptide. The stretch at 54–146 (GLREHVERTR…QNLQSQIDLL (93 aa)) forms a coiled coil. An N-linked (GlcNAc...) asparagine glycan is attached at asparagine 176. Residues 178–400 (TRLHRPPRDC…ATTLLIQPME (223 aa)) form the Fibrinogen C-terminal domain. Cysteine 187 and cysteine 215 are oxidised to a cystine. 2 N-linked (GlcNAc...) asparagine glycosylation sites follow: asparagine 231 and asparagine 237. Cysteine 340 and cysteine 353 are oxidised to a cystine.

Homooligomer; disulfide-linked via Cys residues in the N-terminal part of the protein. The homooligomer undergoes proteolytic processing to release its carboxyl fibrinogen-like domain, which circulates as a monomer. The homooligomer unprocessed form is able to interact with the extracellular matrix. Post-translationally, N-glycosylated. In terms of processing, forms disulfide-linked dimers and tetramers. Cleaved into a smaller N-terminal chain and a larger chain that contains the fibrinogen C-terminal domain; both cleaved and uncleaved forms are detected in the extracellular space. The cleaved form is not present within the cell.

It is found in the secreted. The protein resides in the extracellular space. It localises to the extracellular matrix. Functionally, mediates inactivation of the lipoprotein lipase LPL, and thereby plays a role in the regulation of triglyceride clearance from the blood serum and in lipid metabolism. May also play a role in regulating glucose homeostasis and insulin sensitivity. Inhibits proliferation, migration, and tubule formation of endothelial cells and reduces vascular leakage. Upon heterologous expression, inhibits the adhesion of endothelial cell to the extracellular matrix (ECM), and inhibits the reorganization of the actin cytoskeleton, formation of actin stress fibers and focal adhesions in endothelial cells that have adhered to ANGPTL4-containing ECM (in vitro). Depending on context, may modulate tumor-related angiogenesis. In terms of biological role, mediates inactivation of the lipoprotein lipase LPL, and thereby plays an important role in the regulation of triglyceride clearance from the blood serum and in lipid metabolism. Has higher activity in LPL inactivation than the uncleaved protein. The polypeptide is Angiopoietin-related protein 4 (Angptl4) (Rattus norvegicus (Rat)).